A 208-amino-acid chain; its full sequence is Probable nicotinate-nucleotide adenylyltransferase (208 aa).

It belongs to the NadD family.

The catalysed reaction is nicotinate beta-D-ribonucleotide + ATP + H(+) = deamido-NAD(+) + diphosphate. It participates in cofactor biosynthesis; NAD(+) biosynthesis; deamido-NAD(+) from nicotinate D-ribonucleotide: step 1/1. Its function is as follows. Catalyzes the reversible adenylation of nicotinate mononucleotide (NaMN) to nicotinic acid adenine dinucleotide (NaAD). This is Probable nicotinate-nucleotide adenylyltransferase from Kineococcus radiotolerans (strain ATCC BAA-149 / DSM 14245 / SRS30216).